Here is a 312-residue protein sequence, read N- to C-terminus: MATYLDFESKIEKIQHEIVSAHAIANLEAVEKYQKELEKEIEKTFGSLSDYQKLQLARHPDRPYSLDYIKLLMDDAYEIHGDRAFRDDPAILCYIGWIGGQKTMLIGEQKGRGVKNKIKRNFGMPNPEGYRKALRAVRLAEKFDIPVLMLIDTPGAYPGLGAEERGQSEAIARNLFEFSATKVPMISIVIGEGGSGGALAIGVADKLAMLRYSVFAVISPEGCSAILWNDPSKVETATKALKITPSDLLEHKLVDDVLDEPLIGAHRDKVTTAEAIKTYFLESVKALRELSLDEMLDQRYKRLTAVGAYSEK.

Residues 36-286 (ELEKEIEKTF…KTYFLESVKA (251 aa)) enclose the CoA carboxyltransferase C-terminal domain.

The protein belongs to the AccA family. Acetyl-CoA carboxylase is a heterohexamer composed of biotin carboxyl carrier protein (AccB), biotin carboxylase (AccC) and two subunits each of ACCase subunit alpha (AccA) and ACCase subunit beta (AccD).

The protein resides in the cytoplasm. It carries out the reaction N(6)-carboxybiotinyl-L-lysyl-[protein] + acetyl-CoA = N(6)-biotinyl-L-lysyl-[protein] + malonyl-CoA. It participates in lipid metabolism; malonyl-CoA biosynthesis; malonyl-CoA from acetyl-CoA: step 1/1. Component of the acetyl coenzyme A carboxylase (ACC) complex. First, biotin carboxylase catalyzes the carboxylation of biotin on its carrier protein (BCCP) and then the CO(2) group is transferred by the carboxyltransferase to acetyl-CoA to form malonyl-CoA. In Sulfurovum sp. (strain NBC37-1), this protein is Acetyl-coenzyme A carboxylase carboxyl transferase subunit alpha.